A 504-amino-acid polypeptide reads, in one-letter code: Xylose import ATP-binding protein XylG (504 aa).

2 ABC transporter domains span residues 5 to 242 (LEMK…VGRE) and 259 to 500 (LRVE…VMEA). 37-44 (GENGSGKS) provides a ligand contact to ATP.

The protein belongs to the ABC transporter superfamily. Xylose importer (TC 3.A.1.2.4) family. In terms of assembly, the complex is composed of two ATP-binding proteins (XylG), two transmembrane proteins (XylH) and a solute-binding protein (XylF).

The protein localises to the cell inner membrane. The catalysed reaction is D-xylose(out) + ATP + H2O = D-xylose(in) + ADP + phosphate + H(+). Part of the ABC transporter complex XylFGH involved in xylose import. Responsible for energy coupling to the transport system. The sequence is that of Xylose import ATP-binding protein XylG from Histophilus somni (strain 129Pt) (Haemophilus somnus).